Here is a 673-residue protein sequence, read N- to C-terminus: Centrosomal protein kizuna (673 aa).

5 disordered regions span residues 175–207 (TEHKSPQPTKNFSIPDPHSHRQTAQSSNVTDSC), 255–413 (GSNT…ALKL), 432–480 (QTLS…NSVK), 494–516 (ECGRRSAIHSSESSCSLPSILND), and 613–673 (SEAS…DFYD). Composition is skewed to polar residues over residues 196–207 (QTAQSSNVTDSC) and 255–266 (GSNTRHGKSNLS). 2 stretches are compositionally biased toward basic and acidic residues: residues 267 to 293 (EGKKSAELNSPLRERLSPENRTTDLKC) and 303 to 316 (ILTREHIEVEEKRA). Phosphoserine is present on residues serine 317 and serine 321. Residues 331 to 357 (SENKWSQEKHSPWEGVSDHLAHREPKS) show a composition bias toward basic and acidic residues. Threonine 379 is subject to Phosphothreonine; by PLK1. Over residues 471–480 (TLKEHDNSVK) the composition is skewed to basic and acidic residues. Composition is skewed to low complexity over residues 503 to 512 (SSESSCSLPS) and 613 to 625 (SEASFSSSEGSPL). Serine 647, serine 650, and serine 652 each carry phosphoserine.

Belongs to the kizuna family. In terms of assembly, interacts with AKAP9, CEP72, ODF2, PCNT and TUBGCP2. Phosphorylation at Thr-379 by PLK1 is not needed for centrosomal localization or pericentriolar material expansion but is indispensable for spindle-pole stabilization.

It is found in the cytoplasm. The protein localises to the cytoskeleton. The protein resides in the microtubule organizing center. It localises to the centrosome. Its subcellular location is the cilium basal body. Its function is as follows. Centrosomal protein required for establishing a robust mitotic centrosome architecture that can endure the forces that converge on the centrosomes during spindle formation. Required for stabilizing the expanded pericentriolar material around the centriole. The sequence is that of Centrosomal protein kizuna (KIZ) from Homo sapiens (Human).